Consider the following 364-residue polypeptide: tRNA 2-selenouridine synthase (364 aa).

The region spanning 14–137 (LLADTPLIDV…LRQTAIQATW (124 aa)) is the Rhodanese domain. Catalysis depends on C97, which acts as the S-selanylcysteine intermediate.

This sequence belongs to the SelU family. Monomer.

The catalysed reaction is 5-methylaminomethyl-2-thiouridine(34) in tRNA + selenophosphate + (2E)-geranyl diphosphate + H2O + H(+) = 5-methylaminomethyl-2-selenouridine(34) in tRNA + (2E)-thiogeraniol + phosphate + diphosphate. The enzyme catalyses 5-methylaminomethyl-2-thiouridine(34) in tRNA + (2E)-geranyl diphosphate = 5-methylaminomethyl-S-(2E)-geranyl-thiouridine(34) in tRNA + diphosphate. It carries out the reaction 5-methylaminomethyl-S-(2E)-geranyl-thiouridine(34) in tRNA + selenophosphate + H(+) = 5-methylaminomethyl-2-(Se-phospho)selenouridine(34) in tRNA + (2E)-thiogeraniol. It catalyses the reaction 5-methylaminomethyl-2-(Se-phospho)selenouridine(34) in tRNA + H2O = 5-methylaminomethyl-2-selenouridine(34) in tRNA + phosphate. In terms of biological role, involved in the post-transcriptional modification of the uridine at the wobble position (U34) of tRNA(Lys), tRNA(Glu) and tRNA(Gln). Catalyzes the conversion of 2-thiouridine (S2U-RNA) to 2-selenouridine (Se2U-RNA). Acts in a two-step process involving geranylation of 2-thiouridine (S2U) to S-geranyl-2-thiouridine (geS2U) and subsequent selenation of the latter derivative to 2-selenouridine (Se2U) in the tRNA chain. In Salmonella choleraesuis (strain SC-B67), this protein is tRNA 2-selenouridine synthase.